A 530-amino-acid chain; its full sequence is Bifunctional purine biosynthesis protein PurH (530 aa).

Residues Met-1–Val-148 enclose the MGS-like domain.

It belongs to the PurH family.

The enzyme catalyses (6R)-10-formyltetrahydrofolate + 5-amino-1-(5-phospho-beta-D-ribosyl)imidazole-4-carboxamide = 5-formamido-1-(5-phospho-D-ribosyl)imidazole-4-carboxamide + (6S)-5,6,7,8-tetrahydrofolate. It carries out the reaction IMP + H2O = 5-formamido-1-(5-phospho-D-ribosyl)imidazole-4-carboxamide. The protein operates within purine metabolism; IMP biosynthesis via de novo pathway; 5-formamido-1-(5-phospho-D-ribosyl)imidazole-4-carboxamide from 5-amino-1-(5-phospho-D-ribosyl)imidazole-4-carboxamide (10-formyl THF route): step 1/1. It functions in the pathway purine metabolism; IMP biosynthesis via de novo pathway; IMP from 5-formamido-1-(5-phospho-D-ribosyl)imidazole-4-carboxamide: step 1/1. The protein is Bifunctional purine biosynthesis protein PurH of Aliivibrio fischeri (strain ATCC 700601 / ES114) (Vibrio fischeri).